The sequence spans 209 residues: Uracil phosphoribosyltransferase (209 aa).

Residues arginine 79, arginine 104, and 131–139 (DPMLATGNS) each bind 5-phospho-alpha-D-ribose 1-diphosphate. Residues isoleucine 194 and 199–201 (GDA) contribute to the uracil site. Aspartate 200 serves as a coordination point for 5-phospho-alpha-D-ribose 1-diphosphate.

Belongs to the UPRTase family. It depends on Mg(2+) as a cofactor.

It catalyses the reaction UMP + diphosphate = 5-phospho-alpha-D-ribose 1-diphosphate + uracil. Its pathway is pyrimidine metabolism; UMP biosynthesis via salvage pathway; UMP from uracil: step 1/1. Allosterically activated by GTP. In terms of biological role, catalyzes the conversion of uracil and 5-phospho-alpha-D-ribose 1-diphosphate (PRPP) to UMP and diphosphate. The protein is Uracil phosphoribosyltransferase of Sinorhizobium medicae (strain WSM419) (Ensifer medicae).